We begin with the raw amino-acid sequence, 501 residues long: Aldehyde dehydrogenase 1A1 (501 aa).

S2 carries the post-translational modification N-acetylserine. An N6-acetyllysine mark is found at K91 and K128. Residues 167–170 (IPWN), 193–196 (KPAE), 226–227 (GP), and 246–247 (GS) each bind NAD(+). Position 252 is an N6-acetyllysine (K252). E269 acts as the Proton acceptor in catalysis. 269–271 (ELG) is a binding site for NAD(+). The active-site Nucleophile is C303. Residues 336 to 501 (LTQGINQGPQ…VAMKISQKNS (166 aa)) are mediates interaction with PRMT3. A Phosphothreonine modification is found at T337. Position 349 to 353 (349 to 353 (EQHDK)) interacts with NAD(+). Residues K353 and K367 each carry the N6-acetyllysine modification. Residue 400-402 (EIF) coordinates NAD(+). K410 is subject to N6-acetyllysine. The residue at position 413 (S413) is a Phosphoserine. Residues K419, K435, and K495 each carry the N6-acetyllysine modification.

This sequence belongs to the aldehyde dehydrogenase family. Homotetramer. Interacts with PRMT3; the interaction is direct, inhibits ALDH1A1 aldehyde dehydrogenase activity and is independent of the methyltransferase activity of PRMT3. The N-terminus is blocked most probably by acetylation. As to expression, strongly expressed in kidney, lung, testis, intestine, stomach, and trachea, but weakly in the liver.

It is found in the cytoplasm. The protein localises to the cytosol. The protein resides in the cell projection. Its subcellular location is the axon. It catalyses the reaction an aldehyde + NAD(+) + H2O = a carboxylate + NADH + 2 H(+). It carries out the reaction all-trans-retinal + NAD(+) + H2O = all-trans-retinoate + NADH + 2 H(+). The enzyme catalyses 9-cis-retinal + NAD(+) + H2O = 9-cis-retinoate + NADH + 2 H(+). The catalysed reaction is 11-cis-retinal + NAD(+) + H2O = 11-cis-retinoate + NADH + 2 H(+). It catalyses the reaction 13-cis-retinal + NAD(+) + H2O = 13-cis-retinoate + NADH + 2 H(+). It carries out the reaction 3-deoxyglucosone + NAD(+) + H2O = 2-dehydro-3-deoxy-D-gluconate + NADH + 2 H(+). The enzyme catalyses (E)-4-hydroxynon-2-enal + NAD(+) + H2O = (E)-4-hydroxynon-2-enoate + NADH + 2 H(+). The catalysed reaction is malonaldehyde + NAD(+) + H2O = 3-oxopropanoate + NADH + 2 H(+). It catalyses the reaction hexanal + NAD(+) + H2O = hexanoate + NADH + 2 H(+). It carries out the reaction propanal + NAD(+) + H2O = propanoate + NADH + 2 H(+). The enzyme catalyses acetaldehyde + NAD(+) + H2O = acetate + NADH + 2 H(+). The catalysed reaction is benzaldehyde + NAD(+) + H2O = benzoate + NADH + 2 H(+). It catalyses the reaction 4-aminobutanal + NAD(+) + H2O = 4-aminobutanoate + NADH + 2 H(+). Its pathway is cofactor metabolism; retinol metabolism. Inhibited by chloral hydrate. In terms of biological role, cytosolic dehydrogenase that catalyzes the irreversible oxidation of a wide range of aldehydes to their corresponding carboxylic acid. Functions downstream of retinol dehydrogenases and catalyzes the oxidation of retinaldehyde into retinoic acid, the second step in the oxidation of retinol/vitamin A into retinoic acid. This pathway is crucial to control the levels of retinol and retinoic acid, two important molecules which excess can be teratogenic and cytotoxic. Also oxidizes aldehydes resulting from lipid peroxidation like (E)-4-hydroxynon-2-enal/HNE, malonaldehyde and hexanal that form protein adducts and are highly cytotoxic. By participating for instance to the clearance of (E)-4-hydroxynon-2-enal/HNE in the lens epithelium prevents the formation of HNE-protein adducts and lens opacification. Functions also downstream of fructosamine-3-kinase in the fructosamine degradation pathway by catalyzing the oxidation of 3-deoxyglucosone, the carbohydrate product of fructosamine 3-phosphate decomposition, which is itself a potent glycating agent that may react with lysine and arginine side-chains of proteins. Also has an aminobutyraldehyde dehydrogenase activity and is probably part of an alternative pathway for the biosynthesis of GABA/4-aminobutanoate in midbrain, thereby playing a role in GABAergic synaptic transmission. The polypeptide is Aldehyde dehydrogenase 1A1 (Rattus norvegicus (Rat)).